The primary structure comprises 280 residues: Ribosomal protein L11 methyltransferase (280 aa).

Positions 131, 152, 174, and 217 each coordinate S-adenosyl-L-methionine.

It belongs to the methyltransferase superfamily. PrmA family.

It is found in the cytoplasm. The enzyme catalyses L-lysyl-[protein] + 3 S-adenosyl-L-methionine = N(6),N(6),N(6)-trimethyl-L-lysyl-[protein] + 3 S-adenosyl-L-homocysteine + 3 H(+). Its function is as follows. Methylates ribosomal protein L11. This Bacteroides thetaiotaomicron (strain ATCC 29148 / DSM 2079 / JCM 5827 / CCUG 10774 / NCTC 10582 / VPI-5482 / E50) protein is Ribosomal protein L11 methyltransferase.